The sequence spans 189 residues: UPF0301 protein A1C_00165 (189 aa).

The protein belongs to the UPF0301 (AlgH) family.

The polypeptide is UPF0301 protein A1C_00165 (Rickettsia akari (strain Hartford)).